Here is a 1939-residue protein sequence, read N- to C-terminus: MTDAQMADFGAAAQYLRKSEKERLEAQTRPFDIRTECFVPDDKEEFVKAKILSREGGKVIAETENGKTVTVKEDQVLQQNPPKFDKIEDMAMLTFLHEPAVLFNLKERYAAWMIYTYSGLFCVTVNPYKWLPVYNAEVVAAYRGKKRSEAPPHIFSISDNAYQYMLTDRENQSILITGESGAGKTVNTKRVIQYFASIAAIGDRGKKDNANANKGTLEDQIIQANPALEAFGNAKTVRNDNSSRFGKFIRIHFGATGKLASADIETYLLEKSRVIFQLKAERNYHIFYQILSNKKPELLDMLLVTNNPYDYAFVSQGEVSVASIDDSEELMATDSAFDVLGFTSEEKAGVYKLTGAIMHYGNMKFKQKQREEQAEPDGTEDADKSAYLMGLNSADLLKGLCHPRVKVGNEYVTKGQSVQQVYYSIGALAKAVYEKMFNWMVTRINATLETKQPRQYFIGVLDIAGFEIFDFNSFEQLCINFTNEKLQQFFNHHMFVLEQEEYKKEGIEWTFIDFGMDLQACIDLIEKPMGIMSILEEECMFPKATDMTFKAKLYDNHLGKSNNFQKPRNIKGKQEAHFSLIHYAGTVDYNILGWLEKNKDPLNETVVALYQKSSLKLMATLFSSYATADTGDSGKSKGGKKKGSSFQTVSALHRENLNKLMTNLRTTHPHFVRCIIPNERKAPGVMDNPLVMHQLRCNGVLEGIRICRKGFPNRILYGDFRQRYRILNPVAIPEGQFIDSRKGTEKLLSSLDIDHNQYKFGHTKVFFKAGLLGLLEEMRDERLSRIITRMQAQARGQLMRIEFKKIVERRDALLVIQWNIRAFMGVKNWPWMKLYFKIKPLLKSAETEKEMATMKEEFGRIKETLEKSEARRKELEEKMVSLLQEKNDLQLQVQAEQDNLNDAEERCDQLIKNKIQLEAKVKEMNERLEDEEEMNAELTAKKRKLEDECSELKKDIDDLELTLAKVEKEKHATENKVKNLTEEMAGLDEIIAKLTKEKKALQEAHQQALDDLQVEEDKVNSLSKSKVKLEQQVDDLEGSLEQEKKVRMDLERAKRKLEGDLKLTQESIMDLENDKLQLEEKLKKKEFDINQQNSKIEDEQVLALQLQKKLKENQARIEELEEELEAERTARAKVEKLRSDLSRELEEISERLEEAGGATSVQIEMNKKREAEFQKMRRDLEEATLQHEATAAALRKKHADSVAELGEQIDNLQRVKQKLEKEKSEFKLELDDVTSNMEQIIKAKANLEKVSRTLEDQANEYRVKLEEAQRSLNDFTTQRAKLQTENGELARQLEEKEALISQLTRGKLSYTQQMEDLKRQLEEEGKAKNALAHALQSARHDCDLLREQYEEETEAKAELQRVLSKANSEVAQWRTKYETDAIQRTEELEEAKKKLAQRLQDAEEAVEAVNAKCSSLEKTKHRLQNEIEDLMVDVERSNAAAAALDKKQRNFDKILAEWKQKYEESQSELESSQKEARSLSTELFKLKNAYEESLEHLETFKRENKNLQEEISDLTEQLGEGGKNVHELEKVRKQLEVEKLELQSALEEAEASLEHEEGKILRAQLEFNQIKAEIERKLAEKDEEMEQAKRNHQRVVDSLQTSLDAETRSRNEVLRVKKKMEGDLNEMEIQLSHANRMAAEAQKQVKSLQSLLKDTQIQLDDAVRANDDLKENIAIVERRNNLLQAELEELRAVVEQTERSRKLAEQELIETSERVQLLHSQNTSLINQKKKMESDLTQLQSEVEEAVQECRNAEEKAKKAITDAAMMAEELKKEQDTSAHLERMKKNMEQTIKDLQHRLDEAEQIALKGGKKQLQKLEARVRELEGELEAEQKRNAESVKGMRKSERRIKELTYQTEEDKKNLLRLQDLVDKLQLKVKAYKRQAEEAEEQANTNLSKFRKVQHELDEAEERADIAESQVNKLRAKSRDIGAKQKMHDEE.

The Myosin N-terminal SH3-like domain occupies Asp-32–Pro-81. One can recognise a Myosin motor domain in the interval Asp-85–Asp-780. The residue at position 129 (Lys-129) is an N6,N6,N6-trimethyllysine. Residue Gly-178–Thr-185 participates in ATP binding. Thr-379 carries the post-translational modification Phosphothreonine. At Ser-417 the chain carries Phosphoserine. Actin-binding stretches follow at residues Leu-657 to Glu-679 and Lys-759 to Gly-773. The 30-residue stretch at Leu-783–Ala-812 folds into the IQ domain. Positions Leu-842 to Glu-1939 form a coiled coil. Ser-1139 bears the Phosphoserine mark. Tyr-1261 is subject to Phosphotyrosine. The residue at position 1271 (Ser-1271) is a Phosphoserine. A phosphothreonine mark is found at Thr-1277 and Thr-1284. Ser-1309 is subject to Phosphoserine. Residue Tyr-1310 is modified to Phosphotyrosine. Thr-1311 bears the Phosphothreonine mark. Ser-1512 is subject to Phosphoserine. Thr-1515 carries the post-translational modification Phosphothreonine. Basic and acidic residues-rich tracts occupy residues Gly-1826–Glu-1837 and Lys-1925–Glu-1939. Disordered stretches follow at residues Gly-1826–Ile-1849 and Glu-1909–Glu-1939.

This sequence belongs to the TRAFAC class myosin-kinesin ATPase superfamily. Myosin family. Muscle myosin is a hexameric protein that consists of 2 heavy chain subunits (MHC), 2 alkali light chain subunits (MLC) and 2 regulatory light chain subunits (MLC-2).

It localises to the cytoplasm. The protein localises to the myofibril. Functionally, muscle contraction. This chain is Myosin-6 (MYH6), found in Homo sapiens (Human).